A 362-amino-acid chain; its full sequence is 3-isopropylmalate dehydrogenase (362 aa).

78-91 is a binding site for NAD(+); it reads GPKWEHLAPNDQPE. Substrate is bound by residues Arg99, Arg109, Arg138, and Asp227. The Mg(2+) site is built by Asp227, Asp251, and Asp255. 285–297 provides a ligand contact to NAD(+); the sequence is GSAPDIAGKNIAN.

It belongs to the isocitrate and isopropylmalate dehydrogenases family. LeuB type 1 subfamily. Homodimer. Requires Mg(2+) as cofactor. It depends on Mn(2+) as a cofactor.

Its subcellular location is the cytoplasm. The enzyme catalyses (2R,3S)-3-isopropylmalate + NAD(+) = 4-methyl-2-oxopentanoate + CO2 + NADH. Its pathway is amino-acid biosynthesis; L-leucine biosynthesis; L-leucine from 3-methyl-2-oxobutanoate: step 3/4. Catalyzes the oxidation of 3-carboxy-2-hydroxy-4-methylpentanoate (3-isopropylmalate) to 3-carboxy-4-methyl-2-oxopentanoate. The product decarboxylates to 4-methyl-2 oxopentanoate. This Photobacterium profundum (strain SS9) protein is 3-isopropylmalate dehydrogenase.